The following is a 425-amino-acid chain: UPF0229 protein SG1344 (425 aa).

A disordered region spans residues glycine 49–glutamate 109. Over residues glutamate 50–isoleucine 59 the composition is skewed to polar residues. A compositionally biased stretch (basic and acidic residues) spans proline 77–arginine 90.

This sequence belongs to the UPF0229 family.

This chain is UPF0229 protein SG1344, found in Sodalis glossinidius (strain morsitans).